We begin with the raw amino-acid sequence, 681 residues long: Methionine--tRNA ligase (681 aa).

The 'HIGH' region motif lies at 14-24; sequence PYANGSIHLGH. Residues cysteine 145, cysteine 148, cysteine 158, and cysteine 161 each coordinate Zn(2+). A 'KMSKS' region motif is present at residues 331–335; the sequence is KMSKS. Lysine 334 provides a ligand contact to ATP. The region spanning 579-681 is the tRNA-binding domain; it reads AFAAVDLRIA…AGAKPGQRVH (103 aa).

It belongs to the class-I aminoacyl-tRNA synthetase family. MetG type 1 subfamily. As to quaternary structure, homodimer. The cofactor is Zn(2+).

The protein localises to the cytoplasm. The catalysed reaction is tRNA(Met) + L-methionine + ATP = L-methionyl-tRNA(Met) + AMP + diphosphate. Its function is as follows. Is required not only for elongation of protein synthesis but also for the initiation of all mRNA translation through initiator tRNA(fMet) aminoacylation. The protein is Methionine--tRNA ligase of Azotobacter vinelandii (strain DJ / ATCC BAA-1303).